A 341-amino-acid polypeptide reads, in one-letter code: MSRLDLKNGSVEMVHGSGGRAMGQLIEELFARALRNQWLDQGNDQAQFELPPGRVVMATDSHVISPLFFPGGDIGSLAVHGTINDVAMAGARPCYLAAGFILEEGFPLADLARIVESMAAAAREAGVPVVTGDTKVVERGKGDGVFITTTGVGVVPPGLYLSGDRARPGDRILLSGSIGDHGVTILSLREGLGFEADIGSDSQALHGLVAAMVEAVPEIRCLRDPTRGGLGNTLNELARQSGVGMQLVERAIPLREPVRAACEFLGLDPLYVANEGKLIAICPAEQAERLLEVMREHPQGREAAIIGTVVADAQCFVQMETLFGGSRMVDWLNGEQLPRMC.

Belongs to the HypE family.

Functionally, may be involved in the maturation of the NifE hydrogenase. The chain is Hydrogenase expression/formation protein HupE (hupE) from Azotobacter chroococcum mcd 1.